A 943-amino-acid chain; its full sequence is MGKKRVYEFAKEMHVDNKDVIDIAKNLGIEVKNHMSSIDQDQEAKIKGMLSKQSAGKAPSSQAAKTPAKAAKTSSAAHKEAAKKPVAASAKSNDHADAAEHSQKNAKPAAKQENKPARSNKTSDGKIILSKSTILRPRSTQTAHTNTNHNRGGNTASANNTANGRNSNRSNNNNNNRSANNANRSGNNNRSNERNRNDRNRRFDNQRVTGPMPRAGRPTAANGNPRPVAGNGGKFVKPASERQQPKRQEAVKPANAASKRSEQPRTERPRTEQPAATTNQRFTKPAPVPAAAAPKPASAGSQDNRNSRRGGGNSNFGRSNSYGNRNGFNRNNRRNKKNKRRQQSAPKKEMPQRKERPLPETLIYEVGMNAQDLGKILHREPAELIKKLFMLGVMVNQNQSLDKDTIELLATDYGIDAQEKVHEDISDLDKVFEEENKNQDNLQPRPPVVTIMGHVDHGKTTLLDKLRHTHVTEGEAGGITQHIGAYQVKLRDRLITFLDTPGHAAFTNMRARGADITDIVVLVVAADDGVMPQTIEAIHHAQAAKAPIIVAVNKIDKPGANPDHVMEQLTEYGLIPEDWGGDTIFVKISAKFGKNIDELLEMILLEADVLELKANPDQKAVGTVIEARLDKGKGPVATVLVQQGTLHTGDPIVVGNTFGRVRAMTNDHGRRVKDALPSMPVEITGINDVPQSADKFVVFADERTARAAGEERAKRAQEEERKNTNHVTLDNLFETMKEGQLKEVDVIIKADVQGSVEALAGSLEKIEVKGVRVNIIHQAVGAINESDVTLAAASNAIIIGFNVRPTALAKAQAEQDDVDIRLHSVIYKAIEEVEAAMKGMLEPTYEEKVIGTVTVRETIPVSKVGTVVGGYVDSGYITRDAGVRLVRDGIVKYEGKLGSLRRFKDDVKEVRQGFELGLTIENYNDIKVDDQIEAFTMEQVPVK.

A disordered region spans residues 35–359 (MSSIDQDQEA…MPQRKERPLP (325 aa)). Low complexity predominate over residues 57–76 (KAPSSQAAKTPAKAAKTSSA). 2 stretches are compositionally biased toward basic and acidic residues: residues 92 to 103 (SNDHADAAEHSQ) and 110 to 124 (AKQENKPARSNKTSD). The segment covering 130–141 (SKSTILRPRSTQ) has biased composition (polar residues). A compositionally biased stretch (low complexity) spans 142–190 (TAHTNTNHNRGGNTASANNTANGRNSNRSNNNNNNRSANNANRSGNNNR). Basic and acidic residues-rich tracts occupy residues 191 to 205 (SNERNRNDRNRRFDN), 239 to 250 (ASERQQPKRQEA), and 259 to 271 (KRSEQPRTERPRT). Composition is skewed to low complexity over residues 289 to 299 (PAAAAPKPASA) and 315 to 330 (NFGRSNSYGNRNGFNR). Basic residues predominate over residues 331–342 (NNRRNKKNKRRQ). Residues 346 to 358 (PKKEMPQRKERPL) show a composition bias toward basic and acidic residues. A tr-type G domain is found at 444-613 (PRPPVVTIMG…LLEADVLELK (170 aa)). The G1 stretch occupies residues 453 to 460 (GHVDHGKT). Residue 453-460 (GHVDHGKT) coordinates GTP. Positions 478–482 (GITQH) are G2. Residues 499–502 (DTPG) are G3. GTP contacts are provided by residues 499–503 (DTPGH) and 553–556 (NKID). The G4 stretch occupies residues 553-556 (NKID). Positions 589–591 (SAK) are G5.

It belongs to the TRAFAC class translation factor GTPase superfamily. Classic translation factor GTPase family. IF-2 subfamily.

It is found in the cytoplasm. One of the essential components for the initiation of protein synthesis. Protects formylmethionyl-tRNA from spontaneous hydrolysis and promotes its binding to the 30S ribosomal subunits. Also involved in the hydrolysis of GTP during the formation of the 70S ribosomal complex. This is Translation initiation factor IF-2 from Lacticaseibacillus paracasei (strain ATCC 334 / BCRC 17002 / CCUG 31169 / CIP 107868 / KCTC 3260 / NRRL B-441) (Lactobacillus paracasei).